We begin with the raw amino-acid sequence, 340 residues long: UDP-glucose 4-epimerase (340 aa).

NAD(+) is bound by residues 12–13 (FI), 32–37 (DNYGNS), 59–60 (DV), 81–85 (FAGLK), asparagine 100, serine 125, tyrosine 150, lysine 154, and phenylalanine 179. Positions 125 and 150 each coordinate substrate. The Proton acceptor role is filled by tyrosine 150. Substrate-binding positions include asparagine 180, 200–201 (NL), 217–219 (QVY), arginine 232, and 292–295 (RPGD).

The protein belongs to the NAD(P)-dependent epimerase/dehydratase family. As to quaternary structure, homodimer. The cofactor is NAD(+).

The catalysed reaction is UDP-alpha-D-glucose = UDP-alpha-D-galactose. The protein operates within carbohydrate metabolism; galactose metabolism. Its function is as follows. Involved in the metabolism of galactose. Catalyzes the conversion of UDP-galactose (UDP-Gal) to UDP-glucose (UDP-Glc) through a mechanism involving the transient reduction of NAD. Can also epimerize UDP-GalNAc to UDP-GlcNAc. Involved in the lacto-N-biose I/galacto-N-biose (LNB/GNB) degradation pathway, which is important for host intestinal colonization by bifidobacteria. The chain is UDP-glucose 4-epimerase (lnpD) from Bifidobacterium longum subsp. longum (strain ATCC 15707 / DSM 20219 / JCM 1217 / NCTC 11818 / E194b).